Here is a 412-residue protein sequence, read N- to C-terminus: Argininosuccinate synthase (412 aa).

ATP is bound at residue 8–16 (AYSGGLDTS). Tyr-87 is a binding site for L-citrulline. ATP is bound at residue Gly-117. Thr-119, Asn-123, and Asp-124 together coordinate L-aspartate. Asn-123 provides a ligand contact to L-citrulline. Residues Arg-127, Ser-175, Glu-259, and Tyr-271 each contribute to the L-citrulline site.

The protein belongs to the argininosuccinate synthase family. Type 1 subfamily. As to quaternary structure, homotetramer.

The protein resides in the cytoplasm. It carries out the reaction L-citrulline + L-aspartate + ATP = 2-(N(omega)-L-arginino)succinate + AMP + diphosphate + H(+). Its pathway is amino-acid biosynthesis; L-arginine biosynthesis; L-arginine from L-ornithine and carbamoyl phosphate: step 2/3. This chain is Argininosuccinate synthase, found in Clavibacter michiganensis subsp. michiganensis (strain NCPPB 382).